We begin with the raw amino-acid sequence, 586 residues long: uncharacterized protein (586 aa).

Disordered stretches follow at residues 17–64 (VRRT…ETEE) and 80–123 (HSCS…GGAN). Residues 28 to 37 (PSTSGSIAWT) show a composition bias toward polar residues. 2 stretches are compositionally biased toward low complexity: residues 38–52 (SSES…VSSS) and 80–91 (HSCSAATTSQQS). Over residues 94 to 110 (QSKEHRIGGIKKEEKPI) the composition is skewed to basic and acidic residues. A compositionally biased stretch (gly residues) spans 112–123 (MGGGSSENGGAN). The next 12 membrane-spanning stretches (helical) occupy residues 151 to 171 (WVIL…WIQY), 191 to 211 (WTSM…AWLL), 218 to 238 (LSVL…LLST), 243 to 263 (FWVT…TLGI), 283 to 303 (LGVF…PLIV), 317 to 337 (TLFL…ICFF), 375 to 395 (FVIL…ISTL), 413 to 433 (YVGL…GFIL), 441 to 461 (LTTI…TLTI), 466 to 486 (MVLV…YLPI), 513 to 533 (IFGI…GTFT), and 536 to 556 (IIMS…REDL).

This sequence belongs to the major facilitator superfamily. Feline leukemia virus subgroup C receptor (TC 2.A.1.28.1) family.

It is found in the membrane. This is an uncharacterized protein from Caenorhabditis elegans.